A 469-amino-acid chain; its full sequence is Ribulose bisphosphate carboxylase large chain (469 aa).

Lysine 5 bears the N6,N6,N6-trimethyllysine mark. Substrate contacts are provided by asparagine 114 and threonine 164. The active-site Proton acceptor is the lysine 166. Residue lysine 168 participates in substrate binding. The Mg(2+) site is built by lysine 192, aspartate 194, and glutamate 195. Lysine 192 carries the N6-carboxylysine modification. Residue histidine 285 is the Proton acceptor of the active site. Substrate is bound by residues arginine 286, histidine 318, and serine 370.

It belongs to the RuBisCO large chain family. Type I subfamily. In terms of assembly, heterohexadecamer of 8 large chains and 8 small chains; disulfide-linked. The disulfide link is formed within the large subunit homodimers. The cofactor is Mg(2+). In terms of processing, the disulfide bond which can form in the large chain dimeric partners within the hexadecamer appears to be associated with oxidative stress and protein turnover.

Its subcellular location is the plastid. It is found in the chloroplast. It carries out the reaction 2 (2R)-3-phosphoglycerate + 2 H(+) = D-ribulose 1,5-bisphosphate + CO2 + H2O. The catalysed reaction is D-ribulose 1,5-bisphosphate + O2 = 2-phosphoglycolate + (2R)-3-phosphoglycerate + 2 H(+). RuBisCO catalyzes two reactions: the carboxylation of D-ribulose 1,5-bisphosphate, the primary event in carbon dioxide fixation, as well as the oxidative fragmentation of the pentose substrate in the photorespiration process. Both reactions occur simultaneously and in competition at the same active site. This is Ribulose bisphosphate carboxylase large chain from Fleroya rubrostipulata (Mitragyna rubrostipulata).